A 213-amino-acid polypeptide reads, in one-letter code: FMN-dependent NADH:quinone oxidoreductase 1 (213 aa).

Residue 18 to 20 participates in FMN binding; sequence SVS.

Belongs to the azoreductase type 1 family. In terms of assembly, homodimer. Requires FMN as cofactor.

The enzyme catalyses 2 a quinone + NADH + H(+) = 2 a 1,4-benzosemiquinone + NAD(+). It catalyses the reaction N,N-dimethyl-1,4-phenylenediamine + anthranilate + 2 NAD(+) = 2-(4-dimethylaminophenyl)diazenylbenzoate + 2 NADH + 2 H(+). Its function is as follows. Quinone reductase that provides resistance to thiol-specific stress caused by electrophilic quinones. Functionally, also exhibits azoreductase activity. Catalyzes the reductive cleavage of the azo bond in aromatic azo compounds to the corresponding amines. This chain is FMN-dependent NADH:quinone oxidoreductase 1, found in Bacillus cereus (strain ATCC 10987 / NRS 248).